The primary structure comprises 629 residues: Pentatricopeptide repeat-containing protein At1g62930, chloroplastic (629 aa).

The N-terminal 41 residues, 1 to 41 (MTSCVHLGIVASQSKKMSLAKRFAQLRKASPLFSLRGVYFS), are a transit peptide targeting the chloroplast. 15 PPR repeats span residues 79–113 (SIVE…RISY), 114–148 (DLYS…GYEP), 149–183 (DIVT…EYQP), 184–218 (NTVT…GCQP), 219–253 (DLFT…KIEA), 254–288 (DVVI…GIRP), 289–323 (NVVT…KINP), 324–358 (NVVT…SIDP), 359–393 (DIFT…DCFP), 394–428 (NVVT…GLVG), 429–463 (NTVT…GVPP), 464–498 (DIIT…KMEP), 499–533 (DIYT…GVKP), 534–568 (NVII…GTLP), and 569–603 (NSGT…GFVG).

It belongs to the PPR family. P subfamily.

Its subcellular location is the plastid. It localises to the chloroplast. This is Pentatricopeptide repeat-containing protein At1g62930, chloroplastic from Arabidopsis thaliana (Mouse-ear cress).